Reading from the N-terminus, the 462-residue chain is MDQYREEHDAIGTVQVPASALWGAQTQRSLNNFNISGERMPSALIHALALVKRAAASVNHDLGLLDENIARAIITAADEVLAGEHAGEFPLVVWQTGSGTQTNMNMNEVLANRASEILGGTRGKGRKVHPNDHVNKGQSSNDVFPTAMHIAAVEAIRNRLIPALEALRKTLSSKSAAFSDIVKIGRTHLQDATPLTLGQEFSGYVSQLDHGLAHLESALPHLLELALGGTAVGTGLNTHPEFARRVAAEIARLSGYPFITAANKFEALAAHDALVHAHGVLKTLAAILIKIANDVRWLASGPRCGIGEILIPENEPGSSIMPGKVNPTQSEAVVMLACQVMGNDVAINLGGAMGNFELNTMKPLIIHNFLQSTRLLADGAESFNTHCAAGITANTVRIKQHLQESLMLVTALNPHIGYDKAAEIAKKAHHEMLTLKEAAIRLGYVTAEQFDVWVDPQKMTEV.

Residues 98-100 (SGT), arginine 126, 129-132 (HPND), 139-141 (SSN), and threonine 187 contribute to the substrate site. The segment at 120–141 (GTRGKGRKVHPNDHVNKGQSSN) is disordered. Catalysis depends on histidine 188, which acts as the Proton donor/acceptor. Residue serine 318 is part of the active site. Residues serine 319 and 324–326 (KVN) contribute to the substrate site.

This sequence belongs to the class-II fumarase/aspartase family. Fumarase subfamily. In terms of assembly, homotetramer.

Its subcellular location is the cytoplasm. The catalysed reaction is (S)-malate = fumarate + H2O. It functions in the pathway carbohydrate metabolism; tricarboxylic acid cycle; (S)-malate from fumarate: step 1/1. Functionally, involved in the TCA cycle. Catalyzes the stereospecific interconversion of fumarate to L-malate. This Nitrosomonas europaea (strain ATCC 19718 / CIP 103999 / KCTC 2705 / NBRC 14298) protein is Fumarate hydratase class II.